The chain runs to 678 residues: Putative pentatricopeptide repeat-containing protein At3g18840 (678 aa).

16 PPR repeats span residues 22–56, 57–84, 85–116, 124–158, 159–190, 192–222, 224–258, 259–293, 294–324, 325–359, 360–390, 392–426, 427–457, 458–492, 493–528, and 529–563; these read TAVSSNQLVNLYSKSGLLREARNVFDEMLERNVYS, WNAVIAAYVKFNNVKEARELFESDNCER, DLITYNTLLSGFAKTDGCESEAIEMFGEMHRK, DDFTVTTMVKLSAKLTNVFYGEQLHGVLVKTGNDG, TKFAVSSLIHMYSKCGKFKEVCNIFNGSCVEF, DSVARNAMIAAYCREGDIDKALSVFWRNPEL, DTISWNTLIAGYAQNGYEEEALKMAVSMEENGLKW, DEHSFGAVLNVLSSLKSLKIGKEVHARVLKNGSYS, NKFVSSGIVDVYCKCGNMKYAESAHLLYGFG, NLYSASSMIVGYSSQGKMVEAKRLFDSLSEKNLVV, WTAMFLGYLNLRQPDSVLELARAFIANETNT, DSLVMVSVLGACSLQAYMEPGKEIHGHSLRTGILM, DKKLVTAFVDMYSKCGNVEYAERIFDSSFER, DTVMYNAMIAGCAHHGHEAKSFQHFEDMTEGGFKP, DEITFMALLSACRHRGLVLEGEKYFKSMIEAYNISP, and ETGHYTCMIDLYGKAYRLDKAIELMEGIDQVEKDA. The segment at 565-640 is type E motif; it reads ILGAFLNACS…FSGCSWANID (76 aa). Residues 641 to 671 are type E(+) motif; the sequence is KQFHMFTSSDISHYETEAIYAMLHFVTKDLS.

The protein belongs to the PPR family. PCMP-E subfamily.

The protein is Putative pentatricopeptide repeat-containing protein At3g18840 (PCMP-E92) of Arabidopsis thaliana (Mouse-ear cress).